The following is a 251-amino-acid chain: Haloacid dehalogenase-like hydrolase domain-containing protein 3 (251 aa).

Lys15 is modified (N6-acetyllysine; alternate). The residue at position 15 (Lys15) is an N6-succinyllysine; alternate. At Lys130 the chain carries N6-acetyllysine.

This sequence belongs to the HAD-like hydrolase superfamily.

This is Haloacid dehalogenase-like hydrolase domain-containing protein 3 (HDHD3) from Bos taurus (Bovine).